A 483-amino-acid polypeptide reads, in one-letter code: Glutamate--tRNA ligase (483 aa).

The 'HIGH' region motif lies at 11–21 (PSPTGLLHIGN). A 'KMSKS' region motif is present at residues 255–259 (KLSKR). Lys-258 contributes to the ATP binding site.

The protein belongs to the class-I aminoacyl-tRNA synthetase family. Glutamate--tRNA ligase type 1 subfamily. As to quaternary structure, monomer.

The protein localises to the cytoplasm. It carries out the reaction tRNA(Glu) + L-glutamate + ATP = L-glutamyl-tRNA(Glu) + AMP + diphosphate. In terms of biological role, catalyzes the attachment of glutamate to tRNA(Glu) in a two-step reaction: glutamate is first activated by ATP to form Glu-AMP and then transferred to the acceptor end of tRNA(Glu). The chain is Glutamate--tRNA ligase from Lactococcus lactis subsp. cremoris (strain MG1363).